A 557-amino-acid polypeptide reads, in one-letter code: ETHYLENE INSENSITIVE 3-like 5 protein (557 aa).

2 disordered regions span residues 1-23 (MVEVQDLEPLSPIQDYDEDDLEE) and 61-96 (NLNSVISSPSSSTSASSSSSSSVIVRRTEASRRKKM). The span at 64–82 (SVISSPSSSTSASSSSSSS) shows a compositional bias: low complexity. Residues 270–311 (ERVRRLARQSKCLQDKMMAKETDTWSRVLNQEEARLNRLKIS) adopt a coiled-coil conformation.

This sequence belongs to the EIN3 family.

It is found in the nucleus. Functionally, putative transcription factor that may be involved in the ethylene response pathway. In Arabidopsis thaliana (Mouse-ear cress), this protein is ETHYLENE INSENSITIVE 3-like 5 protein (EIL5).